The following is a 391-amino-acid chain: Tyrosine recombinase XerC-like (391 aa).

One can recognise a Core-binding (CB) domain in the interval 64–148 (VTLGDLMHTW…FLKTFFNYAV (85 aa)). The Tyr recombinase domain maps to 175-384 (TEIETFSDEE…IPKQKTNAVE (210 aa)). Residues arginine 210, lysine 244, histidine 335, arginine 338, and histidine 361 contribute to the active site. Residue tyrosine 371 is the O-(3'-phospho-DNA)-tyrosine intermediate of the active site.

Belongs to the 'phage' integrase family.

The protein resides in the cytoplasm. Its function is as follows. Site-specific tyrosine recombinase, which acts by catalyzing the cutting and rejoining of the recombining DNA molecules. The sequence is that of Tyrosine recombinase XerC-like from Caldanaerobacter subterraneus subsp. tengcongensis (strain DSM 15242 / JCM 11007 / NBRC 100824 / MB4) (Thermoanaerobacter tengcongensis).